The following is a 327-amino-acid chain: MTLDVSKVQTPMRIDRYLTQQVENMTRNKVQAAIEEGRVLVNGKPVKSNYRVKSCDHIHLTFLRPPAPELAPEDIPITILYEDDDLMVIDKEAGMVVHPAFGNWTGTLANAILHHLGKDADELDKTEMRPGIVHRLDKDTSGLIIIAKNPTALHKLARQFANRQVEKVYKAIVWGVPKAESGTIKTNIGRSHKNRKVMANFPYEGAEGKHAITDYQVVEDLGYFSLMDVTLHTGRTHQIRVHLQHLGHSILGDETYGGATPRTLPFSKSEPFTRNLLELMSRQALHAQTLRFRQPTTGEPLSFSAPLPEDMELVLEKIRTVMTASQS.

Positions 12-84 (MRIDRYLTQQ…IPITILYEDD (73 aa)) constitute an S4 RNA-binding domain. Aspartate 137 is an active-site residue.

This sequence belongs to the pseudouridine synthase RluA family.

The enzyme catalyses a uridine in RNA = a pseudouridine in RNA. This is an uncharacterized protein from Chlorobaculum parvum (strain DSM 263 / NCIMB 8327) (Chlorobium vibrioforme subsp. thiosulfatophilum).